We begin with the raw amino-acid sequence, 224 residues long: UPF0758 protein CBUD_1789 (224 aa).

The MPN domain occupies 102 to 224 (QLGCTQDAQQ…SFSFAESGLL (123 aa)). Zn(2+)-binding residues include histidine 173, histidine 175, and aspartate 186. Positions 173-186 (HNHPSGVPDPSQAD) match the JAMM motif motif.

The protein belongs to the UPF0758 family.

This is UPF0758 protein CBUD_1789 from Coxiella burnetii (strain Dugway 5J108-111).